The chain runs to 213 residues: MTKGILGRKIGMTQIFAENGDLIPVTVIHATPNVVLQKKTIENDGYEAIQLGFEDISEKRANKPQIGHAAKANTAPKRFIREIRGANIDEYEVGQEVKVDIFSEGEIVDVTGISKGKGFQGAIKRHGQSRGPMAHGSRYHRRPGSMGSIAPNRVFKTKNLPGRMGGERVTIQNLKIVKVDPERNLLLIKGNVPGPRKGLVIVKSAVKAAKKAK.

Residues 124–151 (KRHGQSRGPMAHGSRYHRRPGSMGSIAP) are disordered.

The protein belongs to the universal ribosomal protein uL3 family. In terms of assembly, part of the 50S ribosomal subunit. Forms a cluster with proteins L14 and L19.

Functionally, one of the primary rRNA binding proteins, it binds directly near the 3'-end of the 23S rRNA, where it nucleates assembly of the 50S subunit. This chain is Large ribosomal subunit protein uL3, found in Geobacillus kaustophilus (strain HTA426).